The sequence spans 626 residues: Janus kinase and microtubule-interacting protein 1 (626 aa).

Residues 1-365 (MSKKGRSKGE…KIKNLTRENV (365 aa)) form a mediates association with microtubules region. Coiled coils occupy residues 19–254 (VQMA…REAE) and 284–413 (ERDV…DDLS). Residues 365–626 (VEMKEKLSAQ…ILFEPKLKFM (262 aa)) are mediates interaction with TYK2 and GABBR1. Residue serine 382 is modified to Phosphoserine. Polar residues predominate over residues 452–461 (ETLSETSCNT). A disordered region spans residues 452 to 480 (ETLSETSCNTDRTDRAPATPEEDLDDTTT). At threonine 470 the chain carries Phosphothreonine. The stretch at 490 to 604 (QLTREYQALQ…EFRVLELEVR (115 aa)) forms a coiled coil.

It belongs to the JAKMIP family. Homodimer. Forms a complex with GABBR1 and KIF5B/kinesin-1. Interacts with JAK1 and TYK2. Post-translationally, phosphorylated.

It is found in the cytoplasm. The protein localises to the cytoskeleton. The protein resides in the membrane. In terms of biological role, associates with microtubules and may play a role in the microtubule-dependent transport of the GABA-B receptor. May play a role in JAK1 signaling and regulate microtubule cytoskeleton rearrangements. The protein is Janus kinase and microtubule-interacting protein 1 (JAKMIP1) of Bos taurus (Bovine).